Here is a 118-residue protein sequence, read N- to C-terminus: Aspartate 1-decarboxylase 1 (118 aa).

The Schiff-base intermediate with substrate; via pyruvic acid role is filled by S25. The residue at position 25 (S25) is a Pyruvic acid (Ser). Position 57 (T57) interacts with substrate. Y58 serves as the catalytic Proton donor. 73 to 75 serves as a coordination point for substrate; it reads GAA.

It belongs to the PanD family. As to quaternary structure, heterooctamer of four alpha and four beta subunits. It depends on pyruvate as a cofactor. Post-translationally, is synthesized initially as an inactive proenzyme, which is activated by self-cleavage at a specific serine bond to produce a beta-subunit with a hydroxyl group at its C-terminus and an alpha-subunit with a pyruvoyl group at its N-terminus.

Its subcellular location is the cytoplasm. The enzyme catalyses L-aspartate + H(+) = beta-alanine + CO2. Its pathway is cofactor biosynthesis; (R)-pantothenate biosynthesis; beta-alanine from L-aspartate: step 1/1. In terms of biological role, catalyzes the pyruvoyl-dependent decarboxylation of aspartate to produce beta-alanine. The chain is Aspartate 1-decarboxylase 1 from Gloeobacter violaceus (strain ATCC 29082 / PCC 7421).